A 156-amino-acid chain; its full sequence is Transcription elongation factor GreA (156 aa).

Residues 46–73 (AEYHAAREKQSFIEGRIKELEALLSLAE) are a coiled coil.

The protein belongs to the GreA/GreB family.

Functionally, necessary for efficient RNA polymerase transcription elongation past template-encoded arresting sites. The arresting sites in DNA have the property of trapping a certain fraction of elongating RNA polymerases that pass through, resulting in locked ternary complexes. Cleavage of the nascent transcript by cleavage factors such as GreA or GreB allows the resumption of elongation from the new 3'terminus. GreA releases sequences of 2 to 3 nucleotides. In Cereibacter sphaeroides (strain ATCC 17025 / ATH 2.4.3) (Rhodobacter sphaeroides), this protein is Transcription elongation factor GreA.